The primary structure comprises 432 residues: Putative D-alanyl-D-alanine carboxypeptidase (432 aa).

The chain crosses the membrane as a helical; Signal-anchor span at residues 7-25 (ATVLLTFSLSAFAVEYPVL).

This sequence belongs to the peptidase S12 family. YfeW subfamily.

It is found in the cell inner membrane. It catalyses the reaction Preferential cleavage: (Ac)2-L-Lys-D-Ala-|-D-Ala. Also transpeptidation of peptidyl-alanyl moieties that are N-acyl substituents of D-alanine.. The protein is Putative D-alanyl-D-alanine carboxypeptidase of Salmonella typhimurium (strain LT2 / SGSC1412 / ATCC 700720).